The following is a 94-amino-acid chain: MICOS complex subunit MIC12 (94 aa).

Residues 7–23 (YGSFSVVASVLGASYYY) form a helical membrane-spanning segment.

It belongs to the MICOS complex subunit Mic12 family. Component of the mitochondrial contact site and cristae organizing system (MICOS) complex.

It localises to the mitochondrion inner membrane. Its function is as follows. Component of the MICOS complex, a large protein complex of the mitochondrial inner membrane that plays crucial roles in the maintenance of crista junctions, inner membrane architecture, and formation of contact sites to the outer membrane. This is MICOS complex subunit MIC12 (AIM5) from Eremothecium gossypii (strain ATCC 10895 / CBS 109.51 / FGSC 9923 / NRRL Y-1056) (Yeast).